A 116-amino-acid chain; its full sequence is Large ribosomal subunit protein bL19 (116 aa).

Belongs to the bacterial ribosomal protein bL19 family.

Functionally, this protein is located at the 30S-50S ribosomal subunit interface and may play a role in the structure and function of the aminoacyl-tRNA binding site. This is Large ribosomal subunit protein bL19 from Chloroflexus aurantiacus (strain ATCC 29366 / DSM 635 / J-10-fl).